The following is a 538-amino-acid chain: Succinyl-CoA:acetate CoA-transferase (538 aa).

305 to 309 (GVGSV) is a binding site for CoA. The active-site 5-glutamyl coenzyme A thioester intermediate is the glutamate 330. Residues asparagine 420 and glycine 424 each contribute to the CoA site.

This sequence belongs to the acetyl-CoA hydrolase/transferase family.

It carries out the reaction succinyl-CoA + acetate = succinate + acetyl-CoA. Functionally, forms succinyl-CoA from succinate and acetyl-CoA. This is Succinyl-CoA:acetate CoA-transferase from Clostridium kluyveri (strain ATCC 8527 / DSM 555 / NBRC 12016 / NCIMB 10680 / K1).